The following is a 219-amino-acid chain: Thymidylate kinase (219 aa).

Residue G7–S14 coordinates ATP.

It belongs to the thymidylate kinase family.

The catalysed reaction is dTMP + ATP = dTDP + ADP. In terms of biological role, phosphorylation of dTMP to form dTDP in both de novo and salvage pathways of dTTP synthesis. The polypeptide is Thymidylate kinase (Chlorobium phaeobacteroides (strain DSM 266 / SMG 266 / 2430)).